We begin with the raw amino-acid sequence, 224 residues long: PHD finger-containing protein 5 (224 aa).

Residues 31-81 (KKPCEVCGSDANELLMMTCFMCRDTREHTYCARVMFQRVPRLWICEECRDF) form a PHD-type zinc finger. C34, C37, C49, C52, H58, C61, C75, and C78 together coordinate Zn(2+). The tract at residues 116–137 (PRTNQVVDNHQDPPIDQTDPSS) is disordered.

As to quaternary structure, interacts directly with AIPP3/BDT1.

Together with AIPP3/BDT1, cooperates to form a BAH-PHD bivalent histone reader complex able to read histone H3 lysine 27 trimethylation (H3K27me3) histone marks in order to regulate transcription, especially to prevent early flowering; promotes AIPP3/BDT1 binding to H3K27me3. The protein is PHD finger-containing protein 5 of Arabidopsis thaliana (Mouse-ear cress).